Here is a 243-residue protein sequence, read N- to C-terminus: Voltage-gated monoatomic cation channel TMEM109 (243 aa).

An N-terminal signal peptide occupies residues M1–A33. Residues Q34–Q83 are Lumenal-facing. Residues V84–A104 form a helical membrane-spanning segment. Over Q105 to G135 the chain is Cytoplasmic. Residues A136–L156 form a helical membrane-spanning segment. Over G157–R185 the chain is Lumenal. Residues A186–S205 traverse the membrane as a helical segment. Over R206–E243 the chain is Cytoplasmic.

In terms of assembly, homooligomer. Interacts with CRYAB; in the cellular response to DNA damage.

Its subcellular location is the nucleus outer membrane. The protein localises to the endoplasmic reticulum membrane. It is found in the sarcoplasmic reticulum membrane. The catalysed reaction is K(+)(in) = K(+)(out). The enzyme catalyses Ca(2+)(in) = Ca(2+)(out). Functions as a voltage-gated monoatomic cation channel permeable to both potassium and calcium. Plays a role in the cellular response to DNA damage. This Mus musculus (Mouse) protein is Voltage-gated monoatomic cation channel TMEM109.